Reading from the N-terminus, the 414-residue chain is Multifunctional CCA protein (414 aa).

ATP is bound by residues Gly8 and Arg11. CTP-binding residues include Gly8 and Arg11. Asp21 and Asp23 together coordinate Mg(2+). ATP-binding residues include Arg91, Arg143, and Arg146. 3 residues coordinate CTP: Arg91, Arg143, and Arg146. An HD domain is found at 232-333 (TGVHVMMVID…TRLVERCDAL (102 aa)).

The protein belongs to the tRNA nucleotidyltransferase/poly(A) polymerase family. Bacterial CCA-adding enzyme type 1 subfamily. In terms of assembly, monomer. Can also form homodimers and oligomers. Mg(2+) serves as cofactor. Ni(2+) is required as a cofactor.

It carries out the reaction a tRNA precursor + 2 CTP + ATP = a tRNA with a 3' CCA end + 3 diphosphate. It catalyses the reaction a tRNA with a 3' CCA end + 2 CTP + ATP = a tRNA with a 3' CCACCA end + 3 diphosphate. Its function is as follows. Catalyzes the addition and repair of the essential 3'-terminal CCA sequence in tRNAs without using a nucleic acid template. Adds these three nucleotides in the order of C, C, and A to the tRNA nucleotide-73, using CTP and ATP as substrates and producing inorganic pyrophosphate. tRNA 3'-terminal CCA addition is required both for tRNA processing and repair. Also involved in tRNA surveillance by mediating tandem CCA addition to generate a CCACCA at the 3' terminus of unstable tRNAs. While stable tRNAs receive only 3'-terminal CCA, unstable tRNAs are marked with CCACCA and rapidly degraded. The polypeptide is Multifunctional CCA protein (Cupriavidus metallidurans (strain ATCC 43123 / DSM 2839 / NBRC 102507 / CH34) (Ralstonia metallidurans)).